Consider the following 850-residue polypeptide: Serine/threonine-protein phosphatase 6 regulatory subunit 3-B (850 aa).

Disordered stretches follow at residues 610 to 652 (NISY…VNHE), 683 to 778 (SDGS…MKET), and 793 to 850 (KSEE…NGPV). Over residues 627–638 (DSEESTDSEEEE) the composition is skewed to acidic residues. Polar residues-rich tracts occupy residues 703 to 731 (ASFS…TSTE) and 764 to 778 (DQMT…MKET). Residues 826-839 (PSSSSQEQRISEQI) show a composition bias toward low complexity.

This sequence belongs to the SAPS family.

In terms of biological role, regulatory subunit of protein phosphatase 6 (PP6). May function as a scaffolding PP6 subunit. The sequence is that of Serine/threonine-protein phosphatase 6 regulatory subunit 3-B (ppp6r3-b) from Xenopus laevis (African clawed frog).